A 159-amino-acid chain; its full sequence is MSTNFFFAFESSEMILITLLFLGLFGRSNLVVSSSCILLCLKYFKLDQLVFPVLESRGLELGLVLLMLHILSPVATEKLTIKDLHSVTSLKGLFALAAGTLATKLNGDGLALMNARPEIIFGLTVGTVLGILFLRGTPCGPVMAAAVTAVFLQIASLFS.

A run of 4 helical transmembrane segments spans residues 15–37, 61–81, 117–137, and 138–158; these read ILIT…SSCI, LGLV…KLTI, PEII…LRGT, and PCGP…ASLF.

The protein belongs to the UPF0756 family.

Its subcellular location is the cell membrane. The protein is UPF0756 membrane protein PTH_1668 of Pelotomaculum thermopropionicum (strain DSM 13744 / JCM 10971 / SI).